A 744-amino-acid polypeptide reads, in one-letter code: Cell surface receptor daf-4 (744 aa).

Positions 1-31 (MNQKGTVRLKALVLICLPLFLIATPVPVAVT) are cleaved as a signal peptide. Over 48–253 (WANTLVSKVA…IALLILAYVG (206 aa)) the chain is Extracellular. N-linked (GlcNAc...) asparagine glycans are attached at residues Asn-60, Asn-134, and Asn-165. Residues 254 to 274 (WKFQQNKKEEIKKQQKIKFDM) traverse the membrane as a helical segment. Residues 275-744 (EKTDALEAGN…PSGTFGTFTT (470 aa)) are Cytoplasmic-facing. The region spanning 306–603 (ITDFQLISKG…FARVWNHIMS (298 aa)) is the Protein kinase domain. Residues 312-320 (ISKGRFGKV) and Lys-338 contribute to the ATP site. The active-site Proton acceptor is the Asp-440. Disordered regions lie at residues 605 to 686 (PDSS…PEPE) and 724 to 744 (AGADTRASTPTPSGTFGTFTT). Basic and acidic residues predominate over residues 620-639 (RGVDDVEQSEKPEGIEEMQH). Residues 731-744 (STPTPSGTFGTFTT) are compositionally biased toward low complexity.

Belongs to the protein kinase superfamily. TKL Ser/Thr protein kinase family. TGFB receptor subfamily. May interact with daf-1 to regulate dauer larva development. Interacts with sma-10. Pharynx, intestine, hypodermis and body wall muscles in L1 through to adult stages. Also expressed in head neurons, ventral cord and tail neurons. Subset of head neurons show coexpression with daf-1 when dauer/nondauer decision is made.

It localises to the cell membrane. The catalysed reaction is L-threonyl-[receptor-protein] + ATP = O-phospho-L-threonyl-[receptor-protein] + ADP + H(+). The enzyme catalyses L-seryl-[receptor-protein] + ATP = O-phospho-L-seryl-[receptor-protein] + ADP + H(+). Its function is as follows. Involved in a TGF-beta pathway. May be a receptor for TGF-beta-like ligand daf-7. Controls the decision of whether or not larvae enter a developmentally arrested state, known as dauer, in response to environmental conditions. Regulates body size and male tail patterning. Involved in regulating entry into quiescence triggered by satiety. Involved in sensitivity to CO2 levels. In Caenorhabditis elegans, this protein is Cell surface receptor daf-4.